The following is a 568-amino-acid chain: Proline--tRNA ligase (568 aa).

It belongs to the class-II aminoacyl-tRNA synthetase family. ProS type 1 subfamily. In terms of assembly, homodimer.

It localises to the cytoplasm. The catalysed reaction is tRNA(Pro) + L-proline + ATP = L-prolyl-tRNA(Pro) + AMP + diphosphate. Functionally, catalyzes the attachment of proline to tRNA(Pro) in a two-step reaction: proline is first activated by ATP to form Pro-AMP and then transferred to the acceptor end of tRNA(Pro). As ProRS can inadvertently accommodate and process non-cognate amino acids such as alanine and cysteine, to avoid such errors it has two additional distinct editing activities against alanine. One activity is designated as 'pretransfer' editing and involves the tRNA(Pro)-independent hydrolysis of activated Ala-AMP. The other activity is designated 'posttransfer' editing and involves deacylation of mischarged Ala-tRNA(Pro). The misacylated Cys-tRNA(Pro) is not edited by ProRS. The polypeptide is Proline--tRNA ligase (Chlamydia pneumoniae (Chlamydophila pneumoniae)).